Consider the following 89-residue polypeptide: Neurotoxin LmNaTx28 (89 aa).

The N-terminal stretch at 1-18 (MNLPTVLCIIALILGVRS) is a signal peptide. The LCN-type CS-alpha/beta domain occupies 20–85 (KNGFFTKLGK…VADSSEKACQ (66 aa)). Intrachain disulfides connect Cys33–Cys57, Cys43–Cys62, Cys47–Cys64, and Cys58–Cys84.

The protein belongs to the long (4 C-C) scorpion toxin superfamily. Sodium channel inhibitor family. Beta subfamily. As to expression, expressed by the venom gland.

The protein resides in the secreted. Binds voltage-independently at site-4 of sodium channels (Nav) and shift the voltage of activation toward more negative potentials thereby affecting sodium channel activation and promoting spontaneous and repetitive firing. This chain is Neurotoxin LmNaTx28, found in Lychas mucronatus (Chinese swimming scorpion).